Here is a 908-residue protein sequence, read N- to C-terminus: MLGLGTLARKIFGTPNDRKVKSVRSLVARINDLEPEFQALSDEGIKQKTAEFQRRVQEGGESLDDLLPEAFANCREGARRALGLRAFDVQLMGGIFLHQGNIAEMKTGEGKTLVATFPAYLNALAGKGVHVVTVNDYLAKRDAEWMGKVYAQLGLATGVVYPFQSDEEKKAAYAADITYATNNELGFDYLRDNMKASKEEMRQRGHFFAIVDEVDSILIDEARTPLIISGPSQDRSDLYTKVDKLIPELVEEHYKLDEKTRNVTFTEEGNEFLEKRLLETGLLPEGQSLYDPESTTIVHHVNQGLRAHKLFNRDQQYIVRDDEIMLIDEFTGRMMRGRRLSDGLHQAIEAKEGVSIQPENVTLASVTFQNYFRLYEKLGGMTGTAATEAEEFMEIYGLGVVEVPTNRPVARADEHDAVYRTAREKHDGIVASIKDAHERGQPILVGTTSIDKSEALSDLLKAAGIPHNVLNARQHEQEAQIVADAGKLGAVTIATNMAGRGTDIQLGGNVEMKVMQALAADPTAHPDEVRARIEAEHAEEKERVKEAGGLFVLGTERHESRRIDNQLRGRSGRQGDPGRSAFFLSLEDDLMRIFGSDRLDKVLSTLGMKEGEAIVHPWVNKSLEKAQAKVEARNFDIRKQLLKFDDVMNDQRKAIFSQRLEIMETEDLSEIAQDMRYQVIDDLIDQHMPPRSYADQWDIEGMHRAVQDKLGLDAPLAKWAQEEGVDLDVVRERLCEASDRQMTEKAEAFGPETMRSIEKQILLQTIDAKWREHLLTLEHLRSVVGFRGYAQRDPLSEYKTEAFALFESMLNSLRQDVTQKLAQVRPLSEEEQQAMMRQFLDQQRAAAAAEAPVAPAPQPAAAAPQPTPELVGAEAGEPDPAAWGNVARNDPCPCGSGLKYKHCHGRLD.

ATP is bound by residues Gln90, 108–112 (GEGKT), and Asp503. Low complexity predominate over residues 846–864 (AAAAEAPVAPAPQPAAAAP). The disordered stretch occupies residues 846–884 (AAAAEAPVAPAPQPAAAAPQPTPELVGAEAGEPDPAAWG). Zn(2+) is bound by residues Cys892, Cys894, Cys903, and His904.

Belongs to the SecA family. Monomer and homodimer. Part of the essential Sec protein translocation apparatus which comprises SecA, SecYEG and auxiliary proteins SecDF-YajC and YidC. It depends on Zn(2+) as a cofactor.

It is found in the cell inner membrane. It localises to the cytoplasm. It catalyses the reaction ATP + H2O + cellular proteinSide 1 = ADP + phosphate + cellular proteinSide 2.. Functionally, part of the Sec protein translocase complex. Interacts with the SecYEG preprotein conducting channel. Has a central role in coupling the hydrolysis of ATP to the transfer of proteins into and across the cell membrane, serving both as a receptor for the preprotein-SecB complex and as an ATP-driven molecular motor driving the stepwise translocation of polypeptide chains across the membrane. The sequence is that of Protein translocase subunit SecA from Cereibacter sphaeroides (strain ATCC 17029 / ATH 2.4.9) (Rhodobacter sphaeroides).